We begin with the raw amino-acid sequence, 534 residues long: DM7 family protein GE17491 (534 aa).

It belongs to the DM7 family.

The chain is DM7 family protein GE17491 from Drosophila yakuba (Fruit fly).